Here is a 481-residue protein sequence, read N- to C-terminus: Cysteine--tRNA ligase (481 aa).

Residue C29 coordinates Zn(2+). Positions P31–N41 match the 'HIGH' region motif. Residues C209, H234, and E238 each coordinate Zn(2+). Positions K267–S271 match the 'KMSKS' region motif. K270 is a binding site for ATP.

The protein belongs to the class-I aminoacyl-tRNA synthetase family. In terms of assembly, monomer. The cofactor is Zn(2+).

It localises to the cytoplasm. It catalyses the reaction tRNA(Cys) + L-cysteine + ATP = L-cysteinyl-tRNA(Cys) + AMP + diphosphate. This chain is Cysteine--tRNA ligase, found in Heliobacterium modesticaldum (strain ATCC 51547 / Ice1).